Here is a 227-residue protein sequence, read N- to C-terminus: NAD(P)H-quinone oxidoreductase subunit K, chloroplastic (227 aa).

Residues cysteine 43, cysteine 44, cysteine 108, and cysteine 139 each contribute to the [4Fe-4S] cluster site.

The protein belongs to the complex I 20 kDa subunit family. In terms of assembly, NDH is composed of at least 16 different subunits, 5 of which are encoded in the nucleus. The cofactor is [4Fe-4S] cluster.

It localises to the plastid. The protein resides in the chloroplast thylakoid membrane. It catalyses the reaction a plastoquinone + NADH + (n+1) H(+)(in) = a plastoquinol + NAD(+) + n H(+)(out). The enzyme catalyses a plastoquinone + NADPH + (n+1) H(+)(in) = a plastoquinol + NADP(+) + n H(+)(out). In terms of biological role, NDH shuttles electrons from NAD(P)H:plastoquinone, via FMN and iron-sulfur (Fe-S) centers, to quinones in the photosynthetic chain and possibly in a chloroplast respiratory chain. It has NADH- and deamino-NADH-specific dehydrogenase activity, using ferricyanide or quinones as acceptors. The immediate electron acceptor for the enzyme in this species is believed to be plastoquinone. Couples the redox reaction to proton translocation, and thus conserves the redox energy in a proton gradient. The protein is NAD(P)H-quinone oxidoreductase subunit K, chloroplastic of Pisum sativum (Garden pea).